A 130-amino-acid chain; its full sequence is Small ribosomal subunit protein uS9 (130 aa).

The disordered stretch occupies residues 104–130 (LTRDPRMKERRKYGLKKARKAPQFSKR). A compositionally biased stretch (basic residues) spans 111–130 (KERRKYGLKKARKAPQFSKR).

Belongs to the universal ribosomal protein uS9 family.

In Moorella thermoacetica (strain ATCC 39073 / JCM 9320), this protein is Small ribosomal subunit protein uS9.